The following is a 740-amino-acid chain: Pheromone-regulated membrane protein 10 (740 aa).

3 disordered regions span residues 1-48, 65-97, and 241-269; these read MGKN…RSGL, FADE…KEEC, and NQPG…PTGE. Positions 7 to 18 are enriched in basic and acidic residues; it reads QAAEGEEARRGS. Low complexity predominate over residues 19–33; sequence ESSGSSAEPSGAVAE. Over residues 67-76 the composition is skewed to acidic residues; it reads DEDEVVEQDE. Positions 256–267 are enriched in polar residues; sequence SAQTLSSETLPT. Helical transmembrane passes span 422-442, 445-465, 475-495, 499-519, 541-561, 574-594, 599-619, 622-642, 651-671, and 707-727; these read AWMC…FAFG, WINL…QFIV, VFEI…GSIP, ICFG…YIIL, IIYS…FGWI, ELSP…LSLI, WSQI…TYWS, HFTA…GIMG, GLAM…GIAS, and ITMI…TLVV.

The protein belongs to the ThrE exporter (TC 2.A.79) family.

It is found in the membrane. In Eremothecium gossypii (strain ATCC 10895 / CBS 109.51 / FGSC 9923 / NRRL Y-1056) (Yeast), this protein is Pheromone-regulated membrane protein 10.